Here is a 489-residue protein sequence, read N- to C-terminus: L-asparagine permease (489 aa).

12 helical membrane passes run 38–58 (HVNMIAIGGAIGTGLFLGAGG), 62–82 (DAGPALAIAYLVAGVFAFFVV), 113–133 (VAGWMYFLNWSTTGIADITAI), 150–170 (VLALVALAVVLAVNLISVKIF), 175–195 (FWFAIVKVATLVGFMLIGIFL), 223–243 (VMPVVLVMQGVIFSYAALELV), 268–288 (VALFYVGSVVLLALLLPSSLY), 302–322 (IGVPAAGDVMNLVVLTAAMSS), 357–377 (YGGILLTCAVCVLGVGLNYLV), 382–402 (FEIVLNVASLGIISTWVIIMI), 426–446 (SPVTEIVTIAFLLAVVGLMWN), and 452–472 (RKTVLLVPVIAVMLVAGWFGV).

The protein belongs to the amino acid-polyamine-organocation (APC) superfamily. Amino acid transporter (AAT) (TC 2.A.3.1) family.

It localises to the cell membrane. In Streptomyces coelicolor (strain ATCC BAA-471 / A3(2) / M145), this protein is L-asparagine permease (ansP).